We begin with the raw amino-acid sequence, 665 residues long: Intraflagellar transport protein 70B (665 aa).

7 TPR repeats span residues 11–44, 45–78, 154–187, 189–221, 393–424, 425–457, and 459–492; these read DGEF…SPRS, RAGL…HPEL, TDGQ…SGYQ, DLSY…GIRQ, LTIQ…EKYI, PVLM…CNDH, and VWKL…HYDN. The disordered stretch occupies residues 130-154; sequence PGSRSLVEQLPSREGGEESGGENET. A coiled-coil region spans residues 508-535; sequence YIMTSQNEEAEELMRKIEKEEEQLSYDD. The TPR 8 repeat unit spans residues 544 to 577; the sequence is CIVNLVIGTLYCAKGNYDFGISRVIKSLEPYNKK.

Belongs to the TTC30/dfy-1/fleer family. As to quaternary structure, interacts with the IFT B complex components IFT27, IFT46, IFT74, IFT52, IFT57, IFT80, IFT81 and IFT88. Interacts with KIF17.

The protein localises to the cell projection. It localises to the cilium. In terms of biological role, required for polyglutamylation of axonemal tubulin. Plays a role in anterograde intraflagellar transport (IFT), the process by which cilia precursors are transported from the base of the cilium to the site of their incorporation at the tip. The sequence is that of Intraflagellar transport protein 70B from Homo sapiens (Human).